We begin with the raw amino-acid sequence, 107 residues long: Nucleoid-associated protein mlr5504 (107 aa).

The protein belongs to the YbaB/EbfC family. In terms of assembly, homodimer.

Its subcellular location is the cytoplasm. It is found in the nucleoid. In terms of biological role, binds to DNA and alters its conformation. May be involved in regulation of gene expression, nucleoid organization and DNA protection. In Mesorhizobium japonicum (strain LMG 29417 / CECT 9101 / MAFF 303099) (Mesorhizobium loti (strain MAFF 303099)), this protein is Nucleoid-associated protein mlr5504.